The sequence spans 213 residues: tRNA (guanine-N(7)-)-methyltransferase (213 aa).

S-adenosyl-L-methionine contacts are provided by Glu44, Glu69, Asp96, and Asp118. Asp118 is a catalytic residue. Substrate contacts are provided by residues Lys122, Asp154, and 192-195 (TEYE).

The protein belongs to the class I-like SAM-binding methyltransferase superfamily. TrmB family.

It catalyses the reaction guanosine(46) in tRNA + S-adenosyl-L-methionine = N(7)-methylguanosine(46) in tRNA + S-adenosyl-L-homocysteine. It participates in tRNA modification; N(7)-methylguanine-tRNA biosynthesis. Functionally, catalyzes the formation of N(7)-methylguanine at position 46 (m7G46) in tRNA. The chain is tRNA (guanine-N(7)-)-methyltransferase from Limosilactobacillus reuteri (strain DSM 20016) (Lactobacillus reuteri).